The chain runs to 251 residues: MSFIAIIPARFASSRLPGKPLADINGKPMVVRVMERAQASGADRVIVATDHQGVVEAVERAGGEVYLTRPDHQSGTERLQEVIDRYDFPDDRIIVNVQGDEPLIPPQIILQVADNLAGAEAGMATLAVPITTAEEAFNPNAVKVVVDARGYALYFSRATIPWDREGFARSREHLSHSLLRHIGIYAYRADFIRRYVSWSASPLEKIEILEQLRVLWYGEKIHVAVSSVAPGMGVDTPEELAQVRLLQQQLD.

This sequence belongs to the KdsB family.

It is found in the cytoplasm. The catalysed reaction is 3-deoxy-alpha-D-manno-oct-2-ulosonate + CTP = CMP-3-deoxy-beta-D-manno-octulosonate + diphosphate. The protein operates within nucleotide-sugar biosynthesis; CMP-3-deoxy-D-manno-octulosonate biosynthesis; CMP-3-deoxy-D-manno-octulosonate from 3-deoxy-D-manno-octulosonate and CTP: step 1/1. It functions in the pathway bacterial outer membrane biogenesis; lipopolysaccharide biosynthesis. Activates KDO (a required 8-carbon sugar) for incorporation into bacterial lipopolysaccharide in Gram-negative bacteria. The chain is 3-deoxy-manno-octulosonate cytidylyltransferase from Sodalis glossinidius (strain morsitans).